We begin with the raw amino-acid sequence, 473 residues long: Membrane protein TMS1 (473 aa).

Residues 1 to 6 (MGAVIS) lie on the Cytoplasmic side of the membrane. Residues 7 to 29 (LPVSMAGSFVASCFGGCCSNLVT) form a helical membrane-spanning segment. Residues 30 to 38 (KTASSLGSS) lie on the Vacuolar side of the membrane. Residues 39–61 (SLGTRLLYAVWLLLNSLISWVSY) traverse the membrane as a helical segment. Residues 62-81 (SANKSILWPGKTCTGTGECG) are Cytoplasmic-facing. The chain crosses the membrane as a helical span at residues 82-104 (FFTVHRLNFALGCLHLILALVLT). Over 105–118 (GVKSTNDVRAALQN) the chain is Vacuolar. The chain crosses the membrane as a helical span at residues 119 to 138 (SWWSLKFILYLCLIVLSFVI). The Cytoplasmic portion of the chain corresponds to 139 to 144 (PNDFYI). Residues 145–167 (FFSKWVSVPSGAIFILVGLILLV) form a helical membrane-spanning segment. The Vacuolar portion of the chain corresponds to 168–194 (DFAHEWAETCISHVESEDEDSSFWQRF). Residues 195–217 (LVLGTTSMYTASIIMTVVMYVMF) traverse the membrane as a helical segment. The Cytoplasmic segment spans residues 218-228 (CHQQCNMNQTA). The chain crosses the membrane as a helical span at residues 229 to 246 (VTVNLILTVITLVLSVNP). At 247-295 (KIQEANPKSGLAQSSMVSVYCTYLTMSAMSSEPDDKMCNPLVRSSGTRK) the chain is on the vacuolar side. A helical membrane pass occupies residues 296 to 318 (FSIILGSLFTFIAIAYTTTRAAA). At 319–398 (NSAFQGTNTN…DDERTGTKYN (80 aa)) the chain is on the cytoplasmic side. Residues 399-421 (YTLFHVIFFLATQWIAILLTINV) traverse the membrane as a helical segment. The Vacuolar portion of the chain corresponds to 422 to 435 (TQDDVGDFIPVGRT). The chain crosses the membrane as a helical span at residues 436–458 (YFYSWVKIVSAWICYALYGWTVV). Residues 459 to 473 (APAIMPDRFDYENYY) are Cytoplasmic-facing.

The protein belongs to the TDE1 family.

The protein resides in the membrane. The polypeptide is Membrane protein TMS1 (TMS1) (Saccharomyces cerevisiae (strain ATCC 204508 / S288c) (Baker's yeast)).